The chain runs to 133 residues: ATP synthase epsilon chain (133 aa).

This sequence belongs to the ATPase epsilon chain family. F-type ATPases have 2 components, CF(1) - the catalytic core - and CF(0) - the membrane proton channel. CF(1) has five subunits: alpha(3), beta(3), gamma(1), delta(1), epsilon(1). CF(0) has three main subunits: a, b and c.

The protein resides in the cell membrane. In terms of biological role, produces ATP from ADP in the presence of a proton gradient across the membrane. This Clostridium acetobutylicum (strain ATCC 824 / DSM 792 / JCM 1419 / IAM 19013 / LMG 5710 / NBRC 13948 / NRRL B-527 / VKM B-1787 / 2291 / W) protein is ATP synthase epsilon chain (atpC).